Reading from the N-terminus, the 583-residue chain is Arginine--tRNA ligase (583 aa).

The 'HIGH' region motif lies at 131–141 (ANPTGPMHVGH).

It belongs to the class-I aminoacyl-tRNA synthetase family. Monomer.

It localises to the cytoplasm. The enzyme catalyses tRNA(Arg) + L-arginine + ATP = L-arginyl-tRNA(Arg) + AMP + diphosphate. This chain is Arginine--tRNA ligase, found in Parvibaculum lavamentivorans (strain DS-1 / DSM 13023 / NCIMB 13966).